The sequence spans 561 residues: MAEAVWSTDTGEAVYRSRDPVRNLRLRVHLQRITSSNFLHYQPAAQMGKDLIDLATFRPPQAASGHRPDEEEEEEVVIGWQEKLFSQFEVDLYQNESACQSPLDHQYRQEILKLENSGGRKNRRIFTYTDSDRYTDLEEYCQKITTSASEVPSFLAERMANVRRRRQDRRGVEGSKLKSRIVTWEPSEDFIKNNHAINTPLQTMYIMADLGPYGKLGYKVHEHVLCILKVDSNGVITVKPDFTGIKGPYRIETEGEKQEHTSAWKYTIDNVSSLAQPEEEEREQRVFKDLYGRHKEYLSSLVGTDFEMIAPGALRLFVNGEVVSAQGYEYDNLYVHFFVELPAANWSSPPFQQLSGVTQACATKSLGMDKVAYFSFPFTFEAFFLHEDESAESLPEWPVLYCKVLSLDFWQRYRVEGYGAVVLPATPGSHTLTVSTWRPMELGLVAELRRFFIGGSLELEDPSYVRIPGTFKGERLSRFGFRTETTGTVTFRLHCLQQSRAFMESNSLQKQMRSVLDRLEGFSQQSSTHNVLEAFRRARRRMQEARESLPQDLVSPTGTLT.

One can recognise a C2 B9-type domain in the interval 314–442 (LRLFVNGEVV…TVSTWRPMEL (129 aa)).

In terms of assembly, part of the tectonic-like complex (also named B9 complex). Interacts with TMEM107. Interacts with TCTN3, AHI1, TCTN1, TCTN2, CC2D2A. Interacts with FLNA. Interacts with TMEM67. Interacts with B9D1 and B9D2. As to expression, widely expressed in embryo at 15.5 dpc, with a relatively strong expression in brain, liver, kidney and digits of the upper limbs. Highly expressed in bronchiolar epithelium.

It is found in the cytoplasm. The protein localises to the cytoskeleton. It localises to the cilium basal body. Its subcellular location is the microtubule organizing center. The protein resides in the centrosome. In terms of biological role, component of the tectonic-like complex, a complex localized at the transition zone of primary cilia and acting as a barrier that prevents diffusion of transmembrane proteins between the cilia and plasma membranes. Involved in centrosome migration to the apical cell surface during early ciliogenesis. Required for ciliary structure and function, including a role in regulating length and appropriate number through modulating centrosome duplication. Required for cell branching morphology. In Mus musculus (Mouse), this protein is Tectonic-like complex member MKS1 (Mks1).